The sequence spans 361 residues: DNA replication and repair protein RecF (361 aa).

ATP is bound at residue 30 to 37 (GANGSGKT).

Belongs to the RecF family.

The protein resides in the cytoplasm. Its function is as follows. The RecF protein is involved in DNA metabolism; it is required for DNA replication and normal SOS inducibility. RecF binds preferentially to single-stranded, linear DNA. It also seems to bind ATP. The sequence is that of DNA replication and repair protein RecF from Glaesserella parasuis serovar 5 (strain SH0165) (Haemophilus parasuis).